Reading from the N-terminus, the 272-residue chain is Cyclase-like protein 2 (272 aa).

Positions Met1–Ala24 are cleaved as a signal peptide.

This sequence belongs to the Cyclase 1 superfamily.

Its subcellular location is the secreted. The protein resides in the extracellular space. It localises to the extracellular matrix. In terms of biological role, may function redundantly with CYCLASE1 for normal plant growth, development and viability. The chain is Cyclase-like protein 2 from Arabidopsis thaliana (Mouse-ear cress).